The primary structure comprises 538 residues: ATP-dependent rRNA helicase RRP3 (538 aa).

Positions 1-11 (MSSAKRVKLSH) are enriched in basic residues. Positions 1–112 (MSSAKRVKLS…SKEETPTKSF (112 aa)) are disordered. Over residues 34-47 (KKITQAPKAAAPIK) the composition is skewed to low complexity. A compositionally biased stretch (acidic residues) spans 53-85 (AEEDDDDDDKDDKDEEDEEQNDDSSDEASENDD). Basic and acidic residues predominate over residues 92–112 (EATKEGQTELPSKEETPTKSF). The Q motif motif lies at 110–138 (KSFRDLGIVEPLCEACEALKFKKPTPIQE). The Helicase ATP-binding domain occupies 141-312 (IPLALQGRDV…RASLRDPLKV (172 aa)). 154 to 161 (AETGSGKT) serves as a coordination point for ATP. Positions 260–263 (DEAD) match the DEAD box motif. The Helicase C-terminal domain maps to 336–486 (HKDVYLIYLA…LFQPDKEEVM (151 aa)). Residues 498 to 512 (HAREEMKALHEDRGK) are compositionally biased toward basic and acidic residues. The interval 498–538 (HAREEMKALHEDRGKKGAVLKGRKRGSATKRRHDDMDAEEG) is disordered. Residues 513 to 528 (KGAVLKGRKRGSATKR) are compositionally biased toward basic residues.

Belongs to the DEAD box helicase family. DDX47/RRP3 subfamily. Interacts with the SSU processome.

It localises to the nucleus. It carries out the reaction ATP + H2O = ADP + phosphate + H(+). Its function is as follows. ATP-dependent rRNA helicase required for pre-ribosomal RNA processing. Involved in the maturation of the 35S-pre-rRNA and to its cleavage to mature 18S rRNA. This chain is ATP-dependent rRNA helicase RRP3, found in Pyricularia oryzae (strain 70-15 / ATCC MYA-4617 / FGSC 8958) (Rice blast fungus).